A 278-amino-acid chain; its full sequence is 4-hydroxy-tetrahydrodipicolinate reductase (278 aa).

Residues 13-18 (GAAGKM) and 111-113 (GTT) contribute to the NAD(+) site. The active-site Proton donor/acceptor is the histidine 167. Residue histidine 168 coordinates (S)-2,3,4,5-tetrahydrodipicolinate. Catalysis depends on lysine 171, which acts as the Proton donor. 177 to 178 (GT) is a (S)-2,3,4,5-tetrahydrodipicolinate binding site.

Belongs to the DapB family.

The protein localises to the cytoplasm. The catalysed reaction is (S)-2,3,4,5-tetrahydrodipicolinate + NAD(+) + H2O = (2S,4S)-4-hydroxy-2,3,4,5-tetrahydrodipicolinate + NADH + H(+). The enzyme catalyses (S)-2,3,4,5-tetrahydrodipicolinate + NADP(+) + H2O = (2S,4S)-4-hydroxy-2,3,4,5-tetrahydrodipicolinate + NADPH + H(+). The protein operates within amino-acid biosynthesis; L-lysine biosynthesis via DAP pathway; (S)-tetrahydrodipicolinate from L-aspartate: step 4/4. Functionally, catalyzes the conversion of 4-hydroxy-tetrahydrodipicolinate (HTPA) to tetrahydrodipicolinate. The chain is 4-hydroxy-tetrahydrodipicolinate reductase from Trichormus variabilis (strain ATCC 29413 / PCC 7937) (Anabaena variabilis).